Here is a 122-residue protein sequence, read N- to C-terminus: S-adenosylmethionine decarboxylase proenzyme (122 aa).

Residue Ser69 is the Schiff-base intermediate with substrate; via pyruvic acid of the active site. Ser69 is modified (pyruvic acid (Ser); by autocatalysis). The Proton acceptor; for processing activity role is filled by His74. Cys89 serves as the catalytic Proton donor; for catalytic activity.

This sequence belongs to the prokaryotic AdoMetDC family. Type 1 subfamily. Heterotetramer of two alpha and two beta chains arranged as a dimer of alpha/beta heterodimers. Requires pyruvate as cofactor. Is synthesized initially as an inactive proenzyme. Formation of the active enzyme involves a self-maturation process in which the active site pyruvoyl group is generated from an internal serine residue via an autocatalytic post-translational modification. Two non-identical subunits are generated from the proenzyme in this reaction, and the pyruvate is formed at the N-terminus of the alpha chain, which is derived from the carboxyl end of the proenzyme. The post-translation cleavage follows an unusual pathway, termed non-hydrolytic serinolysis, in which the side chain hydroxyl group of the serine supplies its oxygen atom to form the C-terminus of the beta chain, while the remainder of the serine residue undergoes an oxidative deamination to produce ammonia and the pyruvoyl group blocking the N-terminus of the alpha chain.

It catalyses the reaction S-adenosyl-L-methionine + H(+) = S-adenosyl 3-(methylsulfanyl)propylamine + CO2. The protein operates within amine and polyamine biosynthesis; S-adenosylmethioninamine biosynthesis; S-adenosylmethioninamine from S-adenosyl-L-methionine: step 1/1. Catalyzes the decarboxylation of S-adenosylmethionine to S-adenosylmethioninamine (dcAdoMet), the propylamine donor required for the synthesis of the polyamines spermine and spermidine from the diamine putrescine. This is S-adenosylmethionine decarboxylase proenzyme from Sulfurisphaera tokodaii (strain DSM 16993 / JCM 10545 / NBRC 100140 / 7) (Sulfolobus tokodaii).